Reading from the N-terminus, the 493-residue chain is Uridine 5'-monophosphate synthase (493 aa).

The tract at residues 1–207 is OPRTase; sequence MVAQNSDKMR…VAKYIAAVQI (207 aa). The interval 208 to 233 is domain linker; sequence NSDGTFVGGDKGDVVRANDLQRTKLT. Residues 234 to 493 are OMPdecase; that stretch reads YENRANLAKS…WAAYQDRVAK (260 aa). Residue K320 is part of the active site.

It in the N-terminal section; belongs to the purine/pyrimidine phosphoribosyltransferase family. This sequence in the C-terminal section; belongs to the OMP decarboxylase family.

It carries out the reaction orotidine 5'-phosphate + diphosphate = orotate + 5-phospho-alpha-D-ribose 1-diphosphate. The catalysed reaction is orotidine 5'-phosphate + H(+) = UMP + CO2. It participates in pyrimidine metabolism; UMP biosynthesis via de novo pathway; UMP from orotate: step 1/2. It functions in the pathway pyrimidine metabolism; UMP biosynthesis via de novo pathway; UMP from orotate: step 2/2. The chain is Uridine 5'-monophosphate synthase (r-l) from Drosophila melanogaster (Fruit fly).